The sequence spans 23 residues: VIPFVASVAAEMQHVYCAASRKC.

Cysteine 17 and cysteine 23 are oxidised to a cystine.

Belongs to the frog skin active peptide (FSAP) family. Brevinin subfamily. Expressed by the skin glands.

Its subcellular location is the secreted. Its function is as follows. Shows antibacterial activity against representative Gram-negative and Gram-positive bacterial species, and a very high hemolytic activity. In Pelophylax lessonae (Pool frog), this protein is Brevinin-1Eb.